The primary structure comprises 190 residues: Potassium-transporting ATPase KdpC subunit (190 aa).

Residues 13-33 (LLLILTLITGILYPIVTTGFA) form a helical membrane-spanning segment.

This sequence belongs to the KdpC family. The system is composed of three essential subunits: KdpA, KdpB and KdpC.

Its subcellular location is the cell inner membrane. Functionally, part of the high-affinity ATP-driven potassium transport (or Kdp) system, which catalyzes the hydrolysis of ATP coupled with the electrogenic transport of potassium into the cytoplasm. This subunit acts as a catalytic chaperone that increases the ATP-binding affinity of the ATP-hydrolyzing subunit KdpB by the formation of a transient KdpB/KdpC/ATP ternary complex. The polypeptide is Potassium-transporting ATPase KdpC subunit (Leptospira interrogans serogroup Icterohaemorrhagiae serovar copenhageni (strain Fiocruz L1-130)).